A 222-amino-acid polypeptide reads, in one-letter code: Pleckstrin homology domain-containing family B member 2 (222 aa).

The PH domain occupies 2–109 (AFVKSGWLLR…WKFTLQDSRT (108 aa)). A 1,2-diacyl-sn-glycero-3-phospho-L-serine is bound at residue K20.

Its subcellular location is the recycling endosome membrane. Its function is as follows. Involved in retrograde transport of recycling endosomes. This Pongo abelii (Sumatran orangutan) protein is Pleckstrin homology domain-containing family B member 2 (PLEKHB2).